A 5762-amino-acid polypeptide reads, in one-letter code: Mucin-5B (5762 aa).

An N-terminal signal peptide occupies residues 1-25 (MGAPSACRTLVLALAAMLVVPQAET). Residues 27–50 (GPVEPSWENAGHTMDGGAPTSSPT) are disordered. The region spanning 75 to 245 (RVCSTWGDFH…KLDGPTEQCP (171 aa)) is the VWFD 1 domain. Disulfide bonds link cysteine 77-cysteine 207 and cysteine 99-cysteine 244. N-linked (GlcNAc...) asparagine glycosylation is present at asparagine 145. Residue glutamate 194 participates in Cu(2+) binding. N-linked (GlcNAc...) asparagine glycans are attached at residues asparagine 201 and asparagine 254. Cu(2+) contacts are provided by histidine 311 and histidine 358. One can recognise a TIL 1 domain in the interval 329 to 385 (CPLNMQHQECGSPCTDTCSNPQRAQLCEDHCVDGCFCPPGTVLDDITHSGCLPLGQC). N-linked (GlcNAc...) asparagine glycosylation occurs at asparagine 401. In terms of domain architecture, VWFD 2 spans 423 to 598 (GTCSVQGGAH…NTWKAQAACA (176 aa)). 3 disulfides stabilise this stretch: cysteine 425-cysteine 562, cysteine 447-cysteine 597, and cysteine 469-cysteine 477. An N-linked (GlcNAc...) asparagine glycan is attached at asparagine 515. 2 TIL domains span residues 695–752 (CPKS…AQEC) and 805–855 (NSSA…EEDC). Asparagine 805 carries N-linked (GlcNAc...) asparagine glycosylation. A VWFC 1 domain is found at 855-927 (CPCVHNEATY…EYILAQDYCG (73 aa)). The VWFD 3 domain maps to 893 to 1062 (GTCVAYGDGH…NSWKLSPSCP (170 aa)). 4 cysteine pairs are disulfide-bonded: cysteine 895/cysteine 1026, cysteine 917/cysteine 1061, cysteine 926/cysteine 1023, and cysteine 944/cysteine 951. N-linked (GlcNAc...) asparagine glycosylation occurs at asparagine 929. 2 N-linked (GlcNAc...) asparagine glycosylation sites follow: asparagine 1276 and asparagine 1292. The Cys-rich subdomain 1 repeat unit spans residues 1333-1432 (CVREVCRWSS…RVLCCEYVPC (100 aa)). The tract at residues 1333 to 4228 (CVREVCRWSS…RVFCCNYGHC (2896 aa)) is 7 X Cys-rich subdomain repeats. Tryptophan 1340 carries C-linked (Man) tryptophan glycosylation. 2 disordered regions span residues 1437 to 1462 (APGT…QTTA) and 1480 to 1502 (LTSQ…GTTT). The span at 1450–1462 (TEPAVPTPTQTTA) shows a compositional bias: low complexity. Residues 1503-1604 (CQPRCQWTEW…VLCCSDDHCR (102 aa)) form a Cys-rich subdomain 2 repeat. Tryptophan 1509 carries a C-linked (Man) tryptophan glycan. An N-linked (GlcNAc...) asparagine glycan is attached at asparagine 1556. Residues 1607–1783 (ATTPPPTTEL…NTTTSQGTTR (177 aa)) form a disordered region. Low complexity predominate over residues 1614 to 1624 (TELETATTTTT). Polar residues-rich tracts occupy residues 1625-1638 (QALF…SSPG) and 1645-1662 (ASTT…SPRY). The span at 1663-1684 (TSTLGTATTGGPTTPAGSTEPT) shows a compositional bias: low complexity. Polar residues predominate over residues 1689–1706 (ATSTLPTRSALPGTTGSL). 2 stretches are compositionally biased toward low complexity: residues 1739-1756 (EPLT…LSTS) and 1765-1777 (TETT…NTTT). N-linked (GlcNAc...) asparagine glycosylation is present at asparagine 1774. A Cys-rich subdomain 3 repeat occupies 1784 to 1885 (CQPKCEWTEW…VLCCDDYSHC (102 aa)). A C-linked (Man) tryptophan glycan is attached at tryptophan 1790. The span at 1890 to 1987 (ATSSTATPSS…TSVTPIPSSS (98 aa)) shows a compositional bias: low complexity. 4 disordered regions span residues 1890 to 2019 (ATSS…TAHT), 2031 to 2100 (GATG…GTTH), 2114 to 2211 (TGSM…HTVR), and 2242 to 2302 (TGTT…SSPT). An 11 X approximate tandem repeats, Ser/Thr-rich region spans residues 1890–2199 (ATSSTATPSS…VPNTMATTHG (310 aa)). Residues 1988–1997 (LGTTWTRLSQ) are compositionally biased toward polar residues. Low complexity predominate over residues 1998-2019 (TTTPTATMSTATPSSTPETAHT). Residues 2114–2181 (TGSMATPSSS…TSNTVTPSSA (68 aa)) are compositionally biased toward low complexity. A compositionally biased stretch (polar residues) spans 2182–2199 (LGTTHTPPVPNTMATTHG). The Cys-rich subdomain 4 repeat unit spans residues 2313–2414 (GCEPQCAWSE…RVFCCNYGHC (102 aa)). A C-linked (Man) tryptophan glycan is attached at tryptophan 2320. The tract at residues 2419–2756 (ATSSTAMPSS…VPNTTATTHG (338 aa)) is 11 X approximate tandem repeats, Ser/Thr-rich. 3 disordered regions span residues 2443 to 2462 (ATTT…PGTT), 2473 to 2522 (TVTV…ATAL), and 2556 to 2861 (TTPT…PTSA). Positions 2556-2738 (TTPTATMSTA…TSSTVTPSSA (183 aa)) are enriched in low complexity. The span at 2739–2786 (LGTTHTPPVPNTTATTHGRSLSPSSPHTVRTAWTSATSGTLGTTHITE) shows a compositional bias: polar residues. Asparagine 2749 is a glycosylation site (N-linked (GlcNAc...) asparagine). The span at 2787–2861 (PSTGTSHTPA…TLLPSSPTSA (75 aa)) shows a compositional bias: low complexity. An HAT 1 repeat occupies 2854–2886 (LPSSPTSAPITTVVTMGCEPQCAWSEWLDYSYP). The stretch at 2871-2971 (CEPQCAWSEW…RVFCCNYGHC (101 aa)) is one Cys-rich subdomain 5 repeat. C-linked (Man) tryptophan glycosylation is present at tryptophan 2877. The segment at 2976–3456 (ATSSTATPSS…VPNTTATTHG (481 aa)) is 17 X approximate tandem repeats, Ser/Thr-rich. Low complexity-rich tracts occupy residues 3001-3017 (TTTA…STPG) and 3026-3049 (TSTA…RTAT). Disordered regions lie at residues 3001-3049 (TTTA…RTAT), 3256-3357 (TTPT…GTTH), 3371-3469 (TGSM…TVRT), and 3481-3561 (TTHI…PTSA). The segment covering 3371-3438 (TGSMATPSSS…TSSTVTPSSA (68 aa)) has biased composition (low complexity). Positions 3439–3456 (LGTTHTPPVPNTTATTHG) are enriched in polar residues. The N-linked (GlcNAc...) asparagine glycan is linked to asparagine 3449. The span at 3487–3561 (PSTVTSHTPA…TLLPSSPTSA (75 aa)) shows a compositional bias: low complexity. The HAT 2 repeat unit spans residues 3554-3586 (LPSSPTSAPITTVVTTGCEPQCAWSEWLDYSYP). One copy of the Cys-rich subdomain 6 repeat lies at 3571–3671 (CEPQCAWSEW…RVFCCNYGHC (101 aa)). The C-linked (Man) tryptophan glycan is linked to tryptophan 3577. The tract at residues 3676 to 4013 (ATSSTATPSS…VPNTTATTHG (338 aa)) is 11 X approximate tandem repeats, Ser/Thr-rich. Disordered stretches follow at residues 3699–3779 (TATT…ATAL), 3813–3917 (TTPT…HTPT), and 3956–4118 (ATGS…PTSA). Positions 3956–3995 (ATGSTTNPSSTPGTTPIPPVLTTTATTPAATSSTVTPSSA) are enriched in low complexity. The span at 3996–4043 (LGTTHTPPVPNTTATTHGRSLSPSSPHTVRTAWTSATSGTLGTTHITE) shows a compositional bias: polar residues. Residue asparagine 4006 is glycosylated (N-linked (GlcNAc...) asparagine). The span at 4044–4118 (PSTGTSHTPA…TLLPSSPTSA (75 aa)) shows a compositional bias: low complexity. Residues 4111–4143 (LPSSPTSAPITTVVTTGCEPQCAWSEWLDYSYP) form an HAT 3 repeat. One copy of the Cys-rich subdomain 7 repeat lies at 4128-4228 (CEPQCAWSEW…RVFCCNYGHC (101 aa)). Tryptophan 4134 is a glycosylation site (C-linked (Man) tryptophan). Residues 4233-4879 (ATSSTAMPSS…TLGTAHTPKV (647 aa)) form a 23 X approximate tandem repeats, Ser/Thr-rich region. Composition is skewed to low complexity over residues 4259-4274 (TTAS…STPG) and 4283-4389 (TSPA…PGTT). 4 disordered regions span residues 4259–4389 (TTAS…PGTT), 4428–4447 (ATTT…PGTT), 4458–4527 (TVTV…AIPS), and 4541–4750 (TTPT…ATSF). 7 N-linked (GlcNAc...) asparagine glycosylation sites follow: asparagine 4804, asparagine 4960, asparagine 5017, asparagine 5024, asparagine 5046, asparagine 5096, and asparagine 5111. A VWFD 4 domain is found at 5073-5261 (CICSMWGGSH…VPDSRKDGCW (189 aa)). 3 disulfide bridges follow: cysteine 5075-cysteine 5221, cysteine 5097-cysteine 5260, and cysteine 5121-cysteine 5132. An N-linked (GlcNAc...) asparagine glycan is attached at asparagine 5215. The VWFC 2 domain maps to 5412-5484 (CPCVGPDGFP…NPCCPETVCV (73 aa)). Asparagine 5486, asparagine 5526, asparagine 5565, asparagine 5566, asparagine 5602, asparagine 5612, asparagine 5663, asparagine 5677, and asparagine 5721 each carry an N-linked (GlcNAc...) asparagine glycan. In terms of domain architecture, VWFC 3 spans 5521-5587 (QLCSYNGTFY…VAGQCCGECV (67 aa)). 4 disulfide bridges follow: cysteine 5653-cysteine 5705, cysteine 5672-cysteine 5719, cysteine 5681-cysteine 5735, and cysteine 5685-cysteine 5737. In terms of domain architecture, CTCK spans 5653–5742 (CEEDSCQVRI…DECGCTPFCV (90 aa)).

As to quaternary structure, homomultimer; disulfide-linked. The N- and C-terminus mediate their assembly into higher order structures to form filaments. The CTCK domains of two polypeptides associate in the endoplasmic reticulum to generate intermolecularly disulfide-bonded dimers. These dimers progress to the Golgi apparatus, which is a more acidic environment than the endoplasmic reticulum. Under acidic conditions, the N-termini form non-covalent intermolecular interactions that juxtapose assemblies from different CTCK-linked dimers to produce long, disulfide-linked polymers that remain highly compact until secretion. Highly glycosylated. C-, N- and O-glycosylated. C-mannosylated in the Cys-rich subdomains probably on the first Trp residue of the WXXW motif. Highly O-glycosylated in the Ser/Thr-rich tandem repeat (TR) region. The repeat region is about 59% O-glycosylated with a high abundance of NeuAc(2)Hex(1)HexNac1-ol. In terms of tissue distribution, expressed on surface airway epithelia. Expressed mainly in mucous cells of submucosal glands of airway tissues. Highly expressed in the sublingual gland. Also found in submaxillary glands, endocervix, gall bladder, and pancreas.

The protein localises to the secreted. In terms of biological role, gel-forming mucin that is thought to contribute to the lubricating and viscoelastic properties of whole saliva and cervical mucus. This chain is Mucin-5B (MUC5B), found in Homo sapiens (Human).